We begin with the raw amino-acid sequence, 173 residues long: MTYLVLLLGLCFVLGGLAVASNPSPYYGVVGLVLASVAGCGWLLSLGVSFVSLVLFMVYLGGMLVVFVYSVSLAADPFPEAWGDWRVVGYGASFILVVIAGMIVGGLIECWKVGVVTVDSGGMFSVRLDFSGVAMFYSYGVGMFLVAGWGLLLTLFVVLELVRGLSRGAIRAV.

Helical transmembrane passes span 1-21, 27-47, 48-68, 88-108, and 139-159; these read MTYLVLLLGLCFVLGGLAVAS, YGVVGLVLASVAGCGWLLSLG, VSFVSLVLFMVYLGGMLVVFV, VGYGASFILVVIAGMIVGGLI, and YGVGMFLVAGWGLLLTLFVVL.

This sequence belongs to the complex I subunit 6 family.

Its subcellular location is the mitochondrion membrane. The catalysed reaction is a ubiquinone + NADH + 5 H(+)(in) = a ubiquinol + NAD(+) + 4 H(+)(out). Its function is as follows. Core subunit of the mitochondrial membrane respiratory chain NADH dehydrogenase (Complex I) that is believed to belong to the minimal assembly required for catalysis. Complex I functions in the transfer of electrons from NADH to the respiratory chain. The immediate electron acceptor for the enzyme is believed to be ubiquinone. The protein is NADH-ubiquinone oxidoreductase chain 6 (MT-ND6) of Calidris maritima (Purple sandpiper).